The following is a 266-amino-acid chain: tRNA pseudouridine synthase A (266 aa).

Residue Asp-55 is the Nucleophile of the active site. A substrate-binding site is contributed by Tyr-110.

The protein belongs to the tRNA pseudouridine synthase TruA family.

It carries out the reaction uridine(38/39/40) in tRNA = pseudouridine(38/39/40) in tRNA. In terms of biological role, formation of pseudouridine at positions 38, 39 and 40 in the anticodon stem and loop of transfer RNAs. The polypeptide is tRNA pseudouridine synthase A (Thermococcus sibiricus (strain DSM 12597 / MM 739)).